The chain runs to 406 residues: Immediate early response gene 5-like protein (406 aa).

Disordered regions lie at residues 166–195 and 216–235; these read QPPH…APAA and AAPS…PSSS. The span at 182-193 shows a compositional bias: pro residues; it reads QPGPAPLPPPAP.

This sequence belongs to the IER family.

The protein is Immediate early response gene 5-like protein (Ier5l) of Mus musculus (Mouse).